The following is a 326-amino-acid chain: tRNA-modifying protein YgfZ (326 aa).

Positions 27 and 189 each coordinate folate.

This sequence belongs to the tRNA-modifying YgfZ family.

It is found in the cytoplasm. Folate-binding protein involved in regulating the level of ATP-DnaA and in the modification of some tRNAs. It is probably a key factor in regulatory networks that act via tRNA modification, such as initiation of chromosomal replication. This Shigella sonnei (strain Ss046) protein is tRNA-modifying protein YgfZ.